The following is a 255-amino-acid chain: 5-oxoprolinase subunit A 1 (255 aa).

The protein belongs to the LamB/PxpA family. As to quaternary structure, forms a complex composed of PxpA, PxpB and PxpC.

It catalyses the reaction 5-oxo-L-proline + ATP + 2 H2O = L-glutamate + ADP + phosphate + H(+). Catalyzes the cleavage of 5-oxoproline to form L-glutamate coupled to the hydrolysis of ATP to ADP and inorganic phosphate. This Agrobacterium fabrum (strain C58 / ATCC 33970) (Agrobacterium tumefaciens (strain C58)) protein is 5-oxoprolinase subunit A 1.